Reading from the N-terminus, the 443-residue chain is Adenylosuccinate synthetase (443 aa).

GTP-binding positions include glycine 12–lysine 18 and glycine 40–threonine 42. Aspartate 13 serves as the catalytic Proton acceptor. Residues aspartate 13 and glycine 40 each coordinate Mg(2+). Residues aspartate 13–lysine 16, asparagine 38–histidine 41, threonine 128, arginine 142, glutamine 223, threonine 238, and arginine 302 contribute to the IMP site. Residue histidine 41 is the Proton donor of the active site. Threonine 298–arginine 304 contacts substrate. GTP-binding positions include arginine 304, lysine 330–aspartate 332, and serine 412–glycine 414.

Belongs to the adenylosuccinate synthetase family. Homodimer. Requires Mg(2+) as cofactor.

It localises to the cytoplasm. It catalyses the reaction IMP + L-aspartate + GTP = N(6)-(1,2-dicarboxyethyl)-AMP + GDP + phosphate + 2 H(+). Its pathway is purine metabolism; AMP biosynthesis via de novo pathway; AMP from IMP: step 1/2. Plays an important role in the de novo pathway of purine nucleotide biosynthesis. Catalyzes the first committed step in the biosynthesis of AMP from IMP. The sequence is that of Adenylosuccinate synthetase from Picosynechococcus sp. (strain ATCC 27264 / PCC 7002 / PR-6) (Agmenellum quadruplicatum).